A 288-amino-acid chain; its full sequence is Elongation factor Ts (288 aa).

The interval 79–82 is involved in Mg(2+) ion dislocation from EF-Tu; it reads TDFV.

It belongs to the EF-Ts family.

Its subcellular location is the cytoplasm. Associates with the EF-Tu.GDP complex and induces the exchange of GDP to GTP. It remains bound to the aminoacyl-tRNA.EF-Tu.GTP complex up to the GTP hydrolysis stage on the ribosome. The chain is Elongation factor Ts from Ehrlichia chaffeensis (strain ATCC CRL-10679 / Arkansas).